The chain runs to 216 residues: Transmembrane protein 186 (216 aa).

Residues 1–68 (MAFLLRVVPR…IYRFRAIRAI (68 aa)) lie on the Mitochondrial matrix side of the membrane. The segment at 31–52 (GDSKRWVGSRSPHSREKSPGTE) is disordered. The helical transmembrane segment at 69 to 91 (GFLSRLKLAQTAVTVVALPPGFY) threads the bilayer. The Mitochondrial intermembrane segment spans residues 92–103 (CYSQGLMTLSSL). The helical transmembrane segment at 104–124 (CLLGGVASFALAMLCWMSHFF) threads the bilayer. Residues 125-216 (RRLVGILYVN…GTLATLKNSK (92 aa)) lie on the Mitochondrial matrix side of the membrane.

This sequence belongs to the TMEM186 family. In terms of assembly, part of the mitochondrial complex I assembly/MCIA complex that comprises at least the core subunits TMEM126B, NDUFAF1, ECSIT and ACAD9 and complement subunits such as COA1 and TMEM186. Interacts with MT-ND3.

It localises to the mitochondrion inner membrane. In terms of biological role, as part of the MCIA complex, required for efficient assembly of the mitochondrial complex I. This chain is Transmembrane protein 186, found in Mus musculus (Mouse).